We begin with the raw amino-acid sequence, 209 residues long: Uracil phosphoribosyltransferase (209 aa).

Residues R79, R104, and 131–139 (DPMLATGGS) each bind 5-phospho-alpha-D-ribose 1-diphosphate. Residues I194 and 199 to 201 (GDA) each bind uracil. D200 serves as a coordination point for 5-phospho-alpha-D-ribose 1-diphosphate.

It belongs to the UPRTase family. The cofactor is Mg(2+).

The catalysed reaction is UMP + diphosphate = 5-phospho-alpha-D-ribose 1-diphosphate + uracil. Its pathway is pyrimidine metabolism; UMP biosynthesis via salvage pathway; UMP from uracil: step 1/1. With respect to regulation, allosterically activated by GTP. Functionally, catalyzes the conversion of uracil and 5-phospho-alpha-D-ribose 1-diphosphate (PRPP) to UMP and diphosphate. In Lacticaseibacillus paracasei (strain ATCC 334 / BCRC 17002 / CCUG 31169 / CIP 107868 / KCTC 3260 / NRRL B-441) (Lactobacillus paracasei), this protein is Uracil phosphoribosyltransferase.